A 165-amino-acid polypeptide reads, in one-letter code: Growth arrest and DNA damage-inducible protein GADD45 alpha (165 aa).

T2 carries the post-translational modification Phosphothreonine.

The protein belongs to the GADD45 family. In terms of assembly, interacts with MAPK14. Predominantly monomeric but also forms dimers and other oligomers as concentration increases. Interacts with GADD45GIP1. Interacts weakly with PCNA. Interacts with AURKA, likely to compete with dimerization.

It localises to the nucleus. Functionally, in T-cells, functions as a regulator of p38 MAPKs by inhibiting p88 phosphorylation and activity. Might affect PCNA interaction with some CDK (cell division protein kinase) complexes; stimulates DNA excision repair in vitro and inhibits entry of cells into S phase. The polypeptide is Growth arrest and DNA damage-inducible protein GADD45 alpha (GADD45A) (Homo sapiens (Human)).